Consider the following 262-residue polypeptide: Tropinone reductase homolog At2g30670 (262 aa).

Residue 13-37 (LVTGGASGIGHAIVEELAGLGARIY) coordinates NADP(+). Residue serine 146 participates in substrate binding. Tyrosine 159 functions as the Proton acceptor in the catalytic mechanism.

The protein belongs to the short-chain dehydrogenases/reductases (SDR) family. SDR65C subfamily.

The protein is Tropinone reductase homolog At2g30670 of Arabidopsis thaliana (Mouse-ear cress).